The following is a 558-amino-acid chain: Dihydroxy-acid dehydratase (558 aa).

Asp78 contacts Mg(2+). Residue Cys119 participates in [2Fe-2S] cluster binding. The Mg(2+) site is built by Asp120 and Lys121. At Lys121 the chain carries N6-carboxylysine. Cys192 contacts [2Fe-2S] cluster. Glu446 contacts Mg(2+). The active-site Proton acceptor is Ser472.

This sequence belongs to the IlvD/Edd family. As to quaternary structure, homodimer. It depends on [2Fe-2S] cluster as a cofactor. Mg(2+) serves as cofactor.

It catalyses the reaction (2R)-2,3-dihydroxy-3-methylbutanoate = 3-methyl-2-oxobutanoate + H2O. The catalysed reaction is (2R,3R)-2,3-dihydroxy-3-methylpentanoate = (S)-3-methyl-2-oxopentanoate + H2O. The protein operates within amino-acid biosynthesis; L-isoleucine biosynthesis; L-isoleucine from 2-oxobutanoate: step 3/4. Its pathway is amino-acid biosynthesis; L-valine biosynthesis; L-valine from pyruvate: step 3/4. Functions in the biosynthesis of branched-chain amino acids. Catalyzes the dehydration of (2R,3R)-2,3-dihydroxy-3-methylpentanoate (2,3-dihydroxy-3-methylvalerate) into 2-oxo-3-methylpentanoate (2-oxo-3-methylvalerate) and of (2R)-2,3-dihydroxy-3-methylbutanoate (2,3-dihydroxyisovalerate) into 2-oxo-3-methylbutanoate (2-oxoisovalerate), the penultimate precursor to L-isoleucine and L-valine, respectively. The sequence is that of Dihydroxy-acid dehydratase from Campylobacter jejuni subsp. jejuni serotype O:2 (strain ATCC 700819 / NCTC 11168).